A 274-amino-acid polypeptide reads, in one-letter code: Energy-coupling factor transporter ATP-binding protein EcfA1 (274 aa).

Residues 11–245 (IELKNVKFKY…ERVIEIAKID (235 aa)) enclose the ABC transporter domain. 45 to 52 (GHNGSGKS) contributes to the ATP binding site.

The protein belongs to the ABC transporter superfamily. Energy-coupling factor EcfA family. Forms a stable energy-coupling factor (ECF) transporter complex composed of 2 membrane-embedded substrate-binding proteins (S component), 2 ATP-binding proteins (A component) and 2 transmembrane proteins (T component).

The protein localises to the cell membrane. Functionally, ATP-binding (A) component of a common energy-coupling factor (ECF) ABC-transporter complex. Unlike classic ABC transporters this ECF transporter provides the energy necessary to transport a number of different substrates. In Mycoplasma mobile (strain ATCC 43663 / 163K / NCTC 11711) (Mesomycoplasma mobile), this protein is Energy-coupling factor transporter ATP-binding protein EcfA1.